The primary structure comprises 177 residues: Interleukin-1 receptor antagonist protein (177 aa).

The first 25 residues, 1–25, serve as a signal peptide directing secretion; sequence MEVCRCHHGYLISLLLFLFHSETAC. A disulfide bridge connects residues cysteine 91 and cysteine 141. 2 N-linked (GlcNAc...) asparagine glycosylation sites follow: asparagine 109 and asparagine 114.

Belongs to the IL-1 family.

It localises to the secreted. Functionally, anti-inflammatory antagonist of interleukin-1 family of proinflammatory cytokines such as interleukin-1beta/IL1B and interleukin-1alpha/IL1A. Protects from immune dysregulation and uncontrolled systemic inflammation triggered by IL1 for a range of innate stimulatory agents such as pathogens. This Tursiops truncatus (Atlantic bottle-nosed dolphin) protein is Interleukin-1 receptor antagonist protein (IL1RN).